Reading from the N-terminus, the 577-residue chain is Origin recognition complex subunit 2 (577 aa).

The Involved in LRWD1-binding repeat unit spans residues 1-100; it reads MSKPELKEDK…GNKVYSFQNR (100 aa). Residues 81–199 form a disordered region; the sequence is SLKNGSATGG…DDEGVAQEHE (119 aa). Threonine 116 is subject to Phosphothreonine. Serine 122 and serine 138 each carry phosphoserine. The segment covering 143–157 has biased composition (basic and acidic residues); that stretch reads SASDKVQPKNNDKSE. Positions 188-199 are enriched in acidic residues; it reads SEDDEGVAQEHE. Residue threonine 226 is modified to Phosphothreonine. A phosphoserine mark is found at serine 248 and serine 280.

Belongs to the ORC2 family. Component of ORC, a complex composed of at least 6 subunits: ORC1, ORC2, ORC3, ORC4, ORC5 and ORC6. ORC is regulated in a cell-cycle dependent manner. It is sequentially assembled at the exit from anaphase of mitosis and disassembled as cells enter S phase. Interacts with DBF4. Interacts with MCM10. Interacts with LRWD1 throughout the cell cycle; this interaction, which occurs only with non-ubiquitinated form of LRWD1, prevents LRWD1 ubiquitination and hence stabilizes the protein. Interacts with POLQ.

It is found in the nucleus. Functionally, component of the origin recognition complex (ORC) that binds origins of replication. DNA-binding is ATP-dependent. The specific DNA sequences that define origins of replication have not been identified yet. ORC is required to assemble the pre-replication complex necessary to initiate DNA replication. Binds histone H3 and H4 trimethylation marks H3K9me3, H3K20me3 and H4K27me3. Stabilizes LRWD1, by protecting it from ubiquitin-mediated proteasomal degradation. Also stabilizes ORC3. In Homo sapiens (Human), this protein is Origin recognition complex subunit 2 (ORC2).